Reading from the N-terminus, the 603-residue chain is MKEMSRYLWPKDSWGDKLRVLLAVGLLVGGKVLNVQVPFFFREIVDSLNVDIAATGGTVATVAGTMIFAYGASRIGAVVSQELRNAVFSSVAQKAIRRVATRTFGHLLNLDLNFHLSKQTGGLTRAIDRGTKGISFLLTSMVFHIVPTALEISMVCGILTYQFGWEFAAVTALTMSAYTAFTIWTTAWRTKFRRQANAADNKASTVAVDSLINYEAVKYFNNEKYEIGRYDKALHQYEKSSIKVATSLAFLNSGQNIIFSSALTIMMWLGAKGIVAGSLSVGDLVLINQLVFQLSVPLNFLGSVYRELRQSLLDMETLFNLQKVNLSIKEKPNAASLVLPKGGEIRFDNVSFGYYPDRPILNNLSVTIPAGKKVAVVGPSGCGKSTLLRLLFRSYDPQSGRIFIDDQDIRDVSLDSLRRSIGVVPQDTPLFNDTVELNIRYGNLDASREKVLEAARRAHIHDKIESWPHGYQTKVGERGLMISGGEKQRLAVSRLILKDPPLLFFDEATSALDTHTEQALMSNINEVLKEKRRTSVFVAHRLRTIYDADVIIVLKEGRVVEMGSHRELMEGNGLYTELWMAQEMSMHDQSLGRSEREAPVPVK.

A helical transmembrane segment spans residues Val-20–Phe-41. An ABC transmembrane type-1 domain is found at Val-20–Gln-310. Residues Arg-42 to Gly-64 are Mitochondrial intermembrane-facing. Residues Thr-65 to Phe-88 form a helical membrane-spanning segment. The Mitochondrial matrix portion of the chain corresponds to Ser-89–Leu-137. A helical membrane pass occupies residues Leu-138 to Tyr-161. Residue Gln-162 is a topological domain, mitochondrial intermembrane. The helical transmembrane segment at Phe-163 to Ile-183 threads the bilayer. Residues Trp-184 to Ala-249 lie on the Mitochondrial matrix side of the membrane. Residues Arg-189–Arg-193 and Asn-252–Gln-255 each bind glutathione. Residues Phe-250–Trp-268 traverse the membrane as a helical segment. Residues Leu-269 to Asp-283 are Mitochondrial intermembrane-facing. A helical membrane pass occupies residues Leu-284 to Tyr-305. Gly-302 serves as a coordination point for glutathione. The Mitochondrial matrix segment spans residues Arg-306 to Lys-603. Residues Ile-345–Ala-581 form the ABC transporter domain. ATP contacts are provided by residues Tyr-354 and Gly-378 to Arg-389.

This sequence belongs to the ABC transporter superfamily. ABCB family. Heavy Metal importer (TC 3.A.1.210) subfamily. In terms of assembly, homodimer.

It is found in the mitochondrion inner membrane. Performs an essential function in the generation of cytoplasmic iron-sulfur proteins by mediating the ATP-dependent export of Fe/S cluster precursors synthesized by NFS1 and other mitochondrial proteins. Hydrolyzes ATP. Binds glutathione and may function by transporting a glutathione-conjugated iron-sulfur compound. The sequence is that of Iron-sulfur clusters transporter ATM1, mitochondrial from Chaetomium globosum (strain ATCC 6205 / CBS 148.51 / DSM 1962 / NBRC 6347 / NRRL 1970) (Soil fungus).